A 257-amino-acid chain; its full sequence is uncharacterized protein (257 aa).

2 disordered regions span residues 86 to 119 (SDEEGDNRPLPTPLVEEDNRPPTPLPEEDDRPLS) and 182 to 206 (STPLGTEESRPQAKPTPTSQLTDGQ). Positions 196-206 (PTPTSQLTDGQ) are enriched in polar residues.

This is an uncharacterized protein from Invertebrate iridescent virus 3 (IIV-3).